The following is a 371-amino-acid chain: Cytochrome b (371 aa).

4 consecutive transmembrane segments (helical) span residues 25–45 (FGSM…FLAV), 69–90 (WMMQ…YIHI), 105–125 (WMSG…GYVL), and 170–190 (FFAL…LHII). Heme b contacts are provided by histidine 75 and histidine 89. Heme b contacts are provided by histidine 174 and histidine 188. An a ubiquinone-binding site is contributed by histidine 193. 4 consecutive transmembrane segments (helical) span residues 218-238 (HKDL…MSFF), 280-300 (LGGA…PFTH), 312-332 (LSQL…WAAT), and 339-358 (FIII…LSFP).

This sequence belongs to the cytochrome b family. The cytochrome bc1 complex contains 3 respiratory subunits (MT-CYB, CYC1 and UQCRFS1), 2 core proteins (UQCRC1 and UQCRC2) and probably 6 low-molecular weight proteins. It depends on heme b as a cofactor.

It is found in the mitochondrion inner membrane. In terms of biological role, component of the ubiquinol-cytochrome c reductase complex (complex III or cytochrome b-c1 complex) that is part of the mitochondrial respiratory chain. The b-c1 complex mediates electron transfer from ubiquinol to cytochrome c. Contributes to the generation of a proton gradient across the mitochondrial membrane that is then used for ATP synthesis. The sequence is that of Cytochrome b (MT-CYB) from Apodora papuana (Papuan olive python).